The chain runs to 262 residues: Type III pantothenate kinase (262 aa).

ATP is bound at residue 10-17; sequence DIGNTTTV. Residue 110–113 coordinates substrate; that stretch reads GADR. Catalysis depends on aspartate 112, which acts as the Proton acceptor. Aspartate 134 lines the K(+) pocket. Threonine 137 is a binding site for ATP. Threonine 189 is a binding site for substrate.

This sequence belongs to the type III pantothenate kinase family. As to quaternary structure, homodimer. It depends on NH4(+) as a cofactor. Requires K(+) as cofactor.

It localises to the cytoplasm. It catalyses the reaction (R)-pantothenate + ATP = (R)-4'-phosphopantothenate + ADP + H(+). The protein operates within cofactor biosynthesis; coenzyme A biosynthesis; CoA from (R)-pantothenate: step 1/5. In terms of biological role, catalyzes the phosphorylation of pantothenate (Pan), the first step in CoA biosynthesis. This chain is Type III pantothenate kinase, found in Deinococcus radiodurans (strain ATCC 13939 / DSM 20539 / JCM 16871 / CCUG 27074 / LMG 4051 / NBRC 15346 / NCIMB 9279 / VKM B-1422 / R1).